Consider the following 677-residue polypeptide: Heat shock transcription factor (677 aa).

Disordered stretches follow at residues Met-1 to Asn-56 and Ser-115 to Pro-164. 2 stretches are compositionally biased toward polar residues: residues Ser-115–Thr-131 and Gln-143–Pro-164. A DNA-binding region spans residues Ala-193–Gln-297. The interval Glu-320 to Val-373 is involved in trimerization. Low complexity-rich tracts occupy residues Asn-400–Asn-416 and Arg-457–Gln-501. 3 disordered regions span residues Asn-400–Gln-444, Arg-457–Ser-541, and Lys-606–Ala-677. The activatory stretch occupies residues Asn-466–Ala-677. Composition is skewed to polar residues over residues Phe-502–Ser-541 and Phe-629–Pro-641. Residues Glu-650–Asn-669 show a composition bias toward basic and acidic residues.

This sequence belongs to the HSF family. Homotrimer. Homotrimerization increases the affinity of HSF1 to DNA. Post-translationally, exhibits temperature-dependent phosphorylation.

It localises to the nucleus. Its function is as follows. DNA-binding transcription factor that specifically binds heat shock promoter elements (HSE) and activates transcription. This chain is Heat shock transcription factor, found in Kluyveromyces lactis (strain ATCC 8585 / CBS 2359 / DSM 70799 / NBRC 1267 / NRRL Y-1140 / WM37) (Yeast).